Consider the following 284-residue polypeptide: Tropomyosin (284 aa).

The interval 1–47 (MDAIKKKMQAMKIEKDNAMDRADAAEEKARQQQERVEKLEEELRDTQ) is disordered. Residues 1 to 284 (MDAIKKKMQA…DQTFQELSGY (284 aa)) adopt a coiled-coil conformation. The segment covering 12 to 38 (KIEKDNAMDRADAAEEKARQQQERVEK) has biased composition (basic and acidic residues).

Belongs to the tropomyosin family. Homodimer.

Tropomyosin, in association with the troponin complex, plays a central role in the calcium dependent regulation of muscle contraction. This Trichinella pseudospiralis (Parasitic roundworm) protein is Tropomyosin.